Reading from the N-terminus, the 694-residue chain is Potassium-transporting ATPase ATP-binding subunit (694 aa).

Helical transmembrane passes span 36–56 (VMFV…RDLI), 62–82 (LAFS…ANFA), 218–238 (IALN…TATI), and 249–269 (IPII…IGAL). The active-site 4-aspartylphosphate intermediate is the Asp-306. Residues Asp-343, Glu-347, 376–383 (FTAQTRMS), and Lys-394 contribute to the ATP site. Positions 530 and 534 each coordinate Mg(2+). The next 3 helical transmembrane spans lie at 600-620 (FAII…LNVM), 628-648 (AILS…PLSL), and 666-686 (LVIY…LIDL).

It belongs to the cation transport ATPase (P-type) (TC 3.A.3) family. Type IA subfamily. In terms of assembly, the system is composed of three essential subunits: KdpA, KdpB and KdpC.

It is found in the cell inner membrane. The catalysed reaction is K(+)(out) + ATP + H2O = K(+)(in) + ADP + phosphate + H(+). Its function is as follows. Part of the high-affinity ATP-driven potassium transport (or Kdp) system, which catalyzes the hydrolysis of ATP coupled with the electrogenic transport of potassium into the cytoplasm. This subunit is responsible for energy coupling to the transport system and for the release of the potassium ions to the cytoplasm. The sequence is that of Potassium-transporting ATPase ATP-binding subunit from Agrobacterium fabrum (strain C58 / ATCC 33970) (Agrobacterium tumefaciens (strain C58)).